Consider the following 124-residue polypeptide: Small ribosomal subunit protein uS12 (124 aa).

The protein belongs to the universal ribosomal protein uS12 family. In terms of assembly, part of the 30S ribosomal subunit. Contacts proteins S8 and S17. May interact with IF1 in the 30S initiation complex.

With S4 and S5 plays an important role in translational accuracy. Functionally, interacts with and stabilizes bases of the 16S rRNA that are involved in tRNA selection in the A site and with the mRNA backbone. Located at the interface of the 30S and 50S subunits, it traverses the body of the 30S subunit contacting proteins on the other side and probably holding the rRNA structure together. The combined cluster of proteins S8, S12 and S17 appears to hold together the shoulder and platform of the 30S subunit. In Photorhabdus laumondii subsp. laumondii (strain DSM 15139 / CIP 105565 / TT01) (Photorhabdus luminescens subsp. laumondii), this protein is Small ribosomal subunit protein uS12.